A 308-amino-acid chain; its full sequence is Ornithine carbamoyltransferase (308 aa).

Carbamoyl phosphate-binding positions include 55-58, glutamine 82, arginine 106, and 133-136; these read STRT and HPCQ. Residues asparagine 164, aspartate 227, and 231 to 232 contribute to the L-ornithine site; that span reads SM. Residues 267–268 and arginine 295 contribute to the carbamoyl phosphate site; that span reads CL.

It belongs to the aspartate/ornithine carbamoyltransferase superfamily. OTCase family.

It is found in the cytoplasm. It carries out the reaction carbamoyl phosphate + L-ornithine = L-citrulline + phosphate + H(+). It functions in the pathway amino-acid biosynthesis; L-arginine biosynthesis; L-arginine from L-ornithine and carbamoyl phosphate: step 1/3. Functionally, reversibly catalyzes the transfer of the carbamoyl group from carbamoyl phosphate (CP) to the N(epsilon) atom of ornithine (ORN) to produce L-citrulline. This chain is Ornithine carbamoyltransferase, found in Prochlorococcus marinus (strain MIT 9312).